The sequence spans 443 residues: Intermediate filament protein ifd-2 (443 aa).

Positions 1–58 (MTDPLNPTRLQNHPALARIIESGRTNLPTGITTSGALSAYAQNAAAIIRDNREREKVE) are head. In terms of domain architecture, IF rod spans 55–405 (EKVEIADLNN…KLMENAEHLR (351 aa)). Residues 59–90 (IADLNNRLARYVEKVRFLEAQNRVLENDIGVF) form a coil 1A region. Residues 91–104 (RNAAHTHSERIAVY) are linker 1. The interval 105-239 (FESEKASLFT…SQHDIAIREE (135 aa)) is coil 1B. The linker 12 stretch occupies residues 240–257 (ISKARRDTTNKNRDYFHN). Residues 258 to 403 (ELHAAMKEIR…YRKLMENAEH (146 aa)) are coil 2. The segment at 404 to 443 (LRTTVQTHVTYNAPPPPLPQSGPRTTSYHAYGSAYNDSLL) is tail.

This sequence belongs to the intermediate filament family.

The protein localises to the cytoplasm. Cytoplasmic intermediate filaments provide mechanical strength to cells. Not essential protein. This chain is Intermediate filament protein ifd-2 (ifd-2), found in Caenorhabditis elegans.